The sequence spans 716 residues: Polyribonucleotide nucleotidyltransferase (716 aa).

Asp485 and Asp491 together coordinate Mg(2+). In terms of domain architecture, KH spans 552–611 (PRFTTIKIDQDKIKDVIGKGGAVIRELTESTNTNIEIGDDGTIKVAASDQADADAAIEKI). One can recognise an S1 motif domain in the interval 621-689 (GKIYQGKVAR…RQGRVRLSMK (69 aa)). A compositionally biased stretch (basic and acidic residues) spans 689 to 698 (KEAAEKKEEP). Positions 689–716 (KEAAEKKEEPAPEAPAEPAAEEENKSEE) are disordered. Over residues 707–716 (AAEEENKSEE) the composition is skewed to acidic residues.

Belongs to the polyribonucleotide nucleotidyltransferase family. As to quaternary structure, component of the RNA degradosome, which is a multiprotein complex involved in RNA processing and mRNA degradation. It depends on Mg(2+) as a cofactor.

It localises to the cytoplasm. It carries out the reaction RNA(n+1) + phosphate = RNA(n) + a ribonucleoside 5'-diphosphate. Its function is as follows. Involved in mRNA degradation. Catalyzes the phosphorolysis of single-stranded polyribonucleotides processively in the 3'- to 5'-direction. In Idiomarina loihiensis (strain ATCC BAA-735 / DSM 15497 / L2-TR), this protein is Polyribonucleotide nucleotidyltransferase.